A 332-amino-acid polypeptide reads, in one-letter code: MSKLPLLPTTVIGSYPRPKWLRESIRLHKAGKISDEDLQEAFNDAVIAVLKDHYNAGVDVPTDGEVRRDEMVEFFAERIKGFKFYGPVRVWGTAYYRKPSVVSKIEYKKPMLVDEFTFAKSVSYTDNLKITITGPYTIVEWSYNEYYKNKKDLVFDLAKAINQEIKNLVEAGAKIIQIDEPALHTRREDVSWGVEAVNEAVKGVNAKLVMHICYGEYSFVAPYLNELKVDQINFAFKIYNYKPLELLKRYGFDKELGAGVIDVHNRRIETSEEVANDIRKILEYFTPEKLWINPDCGLKLLSRKIAYQKLVSMVEGTKVVREELKRKGYSVD.

His211, Cys213, and Cys296 together coordinate Zn(2+).

Belongs to the archaeal MetE family. Requires Zn(2+) as cofactor.

It functions in the pathway amino-acid biosynthesis; L-methionine biosynthesis via de novo pathway. Its function is as follows. Catalyzes the transfer of a methyl group to L-homocysteine resulting in methionine formation. The physiological methyl donor is unknown. The chain is Methionine synthase from Saccharolobus islandicus (strain Y.G.57.14 / Yellowstone #1) (Sulfolobus islandicus).